The following is a 1384-amino-acid chain: ABC transporter C family member 2 (1384 aa).

The ABC transmembrane type-1 1 domain occupies 104-388 (NKISVATKIF…LPEAIHRALS (285 aa)). 5 helical membrane passes run 112–132 (IFVA…IYYI), 140–160 (TFKF…SLTL), 226–246 (IFVF…IVGL), 247–267 (SGLV…FLST), and 333–353 (MITQ…YALT). An ABC transporter 1 domain is found at 505-724 (IEYDGAVQPS…GIDFESIMKT (220 aa)). An ATP-binding site is contributed by 537 to 544 (GIVGSGKT). Residues 729 to 756 (IDENDQSSTSTTDKKSSTSSSSSELKKS) are disordered. The span at 735 to 756 (SSTSTTDKKSSTSSSSSELKKS) shows a compositional bias: low complexity. 5 helical membrane passes run 813–833 (LFFL…LSDF), 852–872 (ILYY…RYFM), 941–961 (LFMM…LVVV), 1036–1056 (GIRL…SSLF), and 1061–1081 (GFSV…NWTI). Residues 814–1093 (FFLTCALYFI…MTELEVKMNS (280 aa)) form the ABC transmembrane type-1 2 domain. In terms of domain architecture, ABC transporter 2 spans 1137-1371 (VEFKNVEIKY…EGSRFKKLVK (235 aa)). Position 1171-1178 (1171-1178 (GRTGAGKS)) interacts with ATP.

This sequence belongs to the ABC transporter superfamily. ABCC family. Conjugate transporter (TC 3.A.1.208) subfamily.

The protein localises to the membrane. The sequence is that of ABC transporter C family member 2 (abcC2) from Dictyostelium discoideum (Social amoeba).